Consider the following 204-residue polypeptide: Urease accessory protein UreG (204 aa).

11–18 (GPVGAGKT) provides a ligand contact to GTP.

It belongs to the SIMIBI class G3E GTPase family. UreG subfamily. Homodimer. UreD, UreF and UreG form a complex that acts as a GTP-hydrolysis-dependent molecular chaperone, activating the urease apoprotein by helping to assemble the nickel containing metallocenter of UreC. The UreE protein probably delivers the nickel.

It is found in the cytoplasm. Facilitates the functional incorporation of the urease nickel metallocenter. This process requires GTP hydrolysis, probably effectuated by UreG. The sequence is that of Urease accessory protein UreG from Staphylococcus saprophyticus subsp. saprophyticus (strain ATCC 15305 / DSM 20229 / NCIMB 8711 / NCTC 7292 / S-41).